The sequence spans 226 residues: Uracil-DNA glycosylase (226 aa).

Aspartate 68 acts as the Proton acceptor in catalysis.

Belongs to the uracil-DNA glycosylase (UDG) superfamily. UNG family.

The protein resides in the cytoplasm. The enzyme catalyses Hydrolyzes single-stranded DNA or mismatched double-stranded DNA and polynucleotides, releasing free uracil.. Its function is as follows. Excises uracil residues from the DNA which can arise as a result of misincorporation of dUMP residues by DNA polymerase or due to deamination of cytosine. This is Uracil-DNA glycosylase from Mycobacteroides abscessus (strain ATCC 19977 / DSM 44196 / CCUG 20993 / CIP 104536 / JCM 13569 / NCTC 13031 / TMC 1543 / L948) (Mycobacterium abscessus).